We begin with the raw amino-acid sequence, 442 residues long: tRNA modification GTPase MnmE (442 aa).

(6S)-5-formyl-5,6,7,8-tetrahydrofolate is bound by residues R27, E84, and K124. The TrmE-type G domain maps to 221–366 (GFQIVILGAP…LMELISQASA (146 aa)). Residues 231 to 236 (NAGKSS), 250 to 256 (TEEPGTT), 275 to 278 (DTAG), and 329 to 332 (NKAD) contribute to the GTP site. Positions 235 and 256 each coordinate Mg(2+). (6S)-5-formyl-5,6,7,8-tetrahydrofolate is bound at residue K442.

This sequence belongs to the TRAFAC class TrmE-Era-EngA-EngB-Septin-like GTPase superfamily. TrmE GTPase family. As to quaternary structure, homodimer. Heterotetramer of two MnmE and two MnmG subunits. K(+) is required as a cofactor.

Its subcellular location is the cytoplasm. Exhibits a very high intrinsic GTPase hydrolysis rate. Involved in the addition of a carboxymethylaminomethyl (cmnm) group at the wobble position (U34) of certain tRNAs, forming tRNA-cmnm(5)s(2)U34. The chain is tRNA modification GTPase MnmE from Chelativorans sp. (strain BNC1).